Here is a 246-residue protein sequence, read N- to C-terminus: Probable transcriptional regulatory protein ACP_0521 (246 aa).

This sequence belongs to the TACO1 family.

The protein localises to the cytoplasm. The protein is Probable transcriptional regulatory protein ACP_0521 of Acidobacterium capsulatum (strain ATCC 51196 / DSM 11244 / BCRC 80197 / JCM 7670 / NBRC 15755 / NCIMB 13165 / 161).